Consider the following 372-residue polypeptide: Zinc finger protein dpff-1 (372 aa).

A disordered region spans residues 108-204; the sequence is VGPTTESVSD…SRSIVKETKY (97 aa). Residues 109 to 131 show a composition bias toward polar residues; that stretch reads GPTTESVSDSSNDSTTIRPSRQT. Positions 132–141 are enriched in basic and acidic residues; that stretch reads QIKEEYRDDY. The span at 142–158 shows a compositional bias: acidic residues; it reads VLDDELSPDEFGSDEDD. The span at 184-196 shows a compositional bias: polar residues; sequence TTRSSVSRLTPSR. Residues 212 to 235 form a C2H2-type zinc finger; that stretch reads YPCDKCSAKYKSLAGLSYHQSYLH. PHD-type zinc fingers lie at residues 256 to 314 and 316 to 361; these read SCDF…CKSC and ICGT…CQVE.

Belongs to the requiem/DPF family.

It is found in the nucleus. The protein localises to the cytoplasm. In terms of biological role, probable transcription factor, involved in meiosis and stress protection. The chain is Zinc finger protein dpff-1 from Caenorhabditis elegans.